Consider the following 88-residue polypeptide: Secretion system apparatus protein SsaS (88 aa).

2 helical membrane passes run 15–35 (WIVL…GVIV) and 55–75 (LLAI…ILLN).

The protein belongs to the FliQ/MopD/SpaQ family.

Its subcellular location is the cell membrane. Part of a type III secretion system. The protein is Secretion system apparatus protein SsaS (ssaS) of Salmonella typhimurium (strain LT2 / SGSC1412 / ATCC 700720).